Reading from the N-terminus, the 299-residue chain is Dermonecrotic toxin LiSicTox-alphaIVA1 (299 aa).

Residues Met-1 to Gly-18 form the signal peptide. Residue His-30 is part of the active site. Residues Glu-50 and Asp-52 each contribute to the Mg(2+) site. His-66 acts as the Nucleophile in catalysis. 2 disulfides stabilise this stretch: Cys-70–Cys-76 and Cys-72–Cys-217. Asp-110 is a binding site for Mg(2+).

This sequence belongs to the arthropod phospholipase D family. Class II subfamily. Class IIa sub-subfamily. Mg(2+) serves as cofactor. In terms of tissue distribution, expressed by the venom gland.

The protein resides in the secreted. The catalysed reaction is an N-(acyl)-sphingosylphosphocholine = an N-(acyl)-sphingosyl-1,3-cyclic phosphate + choline. The enzyme catalyses an N-(acyl)-sphingosylphosphoethanolamine = an N-(acyl)-sphingosyl-1,3-cyclic phosphate + ethanolamine. It carries out the reaction a 1-acyl-sn-glycero-3-phosphocholine = a 1-acyl-sn-glycero-2,3-cyclic phosphate + choline. It catalyses the reaction a 1-acyl-sn-glycero-3-phosphoethanolamine = a 1-acyl-sn-glycero-2,3-cyclic phosphate + ethanolamine. In terms of biological role, dermonecrotic toxins cleave the phosphodiester linkage between the phosphate and headgroup of certain phospholipids (sphingolipid and lysolipid substrates), forming an alcohol (often choline) and a cyclic phosphate. This toxin acts on sphingomyelin (SM) with high activity. It may also act on ceramide phosphoethanolamine (CPE), lysophosphatidylcholine (LPC) and lysophosphatidylethanolamine (LPE), but not on lysophosphatidylserine (LPS), and lysophosphatidylglycerol (LPG). It acts by transphosphatidylation, releasing exclusively cyclic phosphate products as second products. Has hemolytic activity in human erythrocytes in a dose-dependent manner. In vivo, this toxin induces dermonecrosis, edema, hemorrhage, massive inflammatory response, as well as vascular permeability. In addition, thrombus formation has also been detected in dermal blood vessels. It also induces platelet aggregation. It is noteworthy that a Glu-248 replaces the Asp present in paralogs, without decrease in catalytic and hemolytic activities. This chain is Dermonecrotic toxin LiSicTox-alphaIVA1, found in Loxosceles intermedia (Brown spider).